Consider the following 286-residue polypeptide: NAD kinase (286 aa).

Aspartate 68 functions as the Proton acceptor in the catalytic mechanism. NAD(+)-binding positions include 68 to 69 (DG), lysine 73, 142 to 143 (ND), arginine 153, aspartate 172, 183 to 188 (TGYSFS), and glutamine 242.

Belongs to the NAD kinase family. A divalent metal cation serves as cofactor.

The protein resides in the cytoplasm. The enzyme catalyses NAD(+) + ATP = ADP + NADP(+) + H(+). Functionally, involved in the regulation of the intracellular balance of NAD and NADP, and is a key enzyme in the biosynthesis of NADP. Catalyzes specifically the phosphorylation on 2'-hydroxyl of the adenosine moiety of NAD to yield NADP. The polypeptide is NAD kinase (Natranaerobius thermophilus (strain ATCC BAA-1301 / DSM 18059 / JW/NM-WN-LF)).